The chain runs to 135 residues: Ribonuclease P protein component (135 aa).

The protein belongs to the RnpA family. As to quaternary structure, consists of a catalytic RNA component (M1 or rnpB) and a protein subunit.

The enzyme catalyses Endonucleolytic cleavage of RNA, removing 5'-extranucleotides from tRNA precursor.. Its function is as follows. RNaseP catalyzes the removal of the 5'-leader sequence from pre-tRNA to produce the mature 5'-terminus. It can also cleave other RNA substrates such as 4.5S RNA. The protein component plays an auxiliary but essential role in vivo by binding to the 5'-leader sequence and broadening the substrate specificity of the ribozyme. This is Ribonuclease P protein component from Pseudomonas aeruginosa (strain ATCC 15692 / DSM 22644 / CIP 104116 / JCM 14847 / LMG 12228 / 1C / PRS 101 / PAO1).